Reading from the N-terminus, the 1010-residue chain is Retinoblastoma-related protein 1 (1010 aa).

The segment at 1–23 (MEGAAPPASSGSEVTGAGSGKVD) is disordered. Residues 419-619 (TPVSTAMTTA…EKGSSMYNSL (201 aa)) form a domain A region. The pocket stretch occupies residues 419–861 (TPVSTAMTTA…NEVFIPTVKP (443 aa)). The interval 620-730 (IVARPTLSAE…PAAGGELCAE (111 aa)) is spacer. The tract at residues 657–679 (LPPLPFQKQEHSPDKDEVRSPKR) is disordered. Positions 664 to 679 (KQEHSPDKDEVRSPKR) are enriched in basic and acidic residues. The segment at 731 to 861 (TGIGVFLSKI…NEVFIPTVKP (131 aa)) is domain B. A disordered region spans residues 868–898 (SGTSPNKKNEEKCAADGPYPESPRLSRFPNL).

This sequence belongs to the retinoblastoma protein (RB) family.

The protein resides in the nucleus. Its function is as follows. Regulator of biological processes that recruits a histone deacetylase to control gene transcription. May play a role in the entry into mitosis, negatively regulating the cell proliferation. Formation of stable complexes with geminiviridae replication-associated proteins may create a cellular environment which favors viral DNA replication. The polypeptide is Retinoblastoma-related protein 1 (RBR1) (Oryza sativa subsp. japonica (Rice)).